Consider the following 351-residue polypeptide: MANFFSLGGNQEQQHQEISSSQALVPTESNNWFLYRNEHHHHHHNQEIPNTYKGFELWQSGNTPQHQHQHHQQQQQFRHPIYPLQDLYSTDVGLGVGPSRSGFDISAGDHEASRSGFVMMRSGGGGISCQDCGNQAKKDCQHMRCRTCCKSRGFQCQTHVKSTWVPAAKRRERQQQLAALQQQQQGHNNNNNNHKNKRQREDPSASSLVSTRLPSNTNGLEVGKFPSKVRTSAVFQCIQMSSIEDDEDQLAYQAAVSIGGHVFKGILYDQGHESQYNNMVAAGGDTSSGGSAGGVQHHHHNSAAVATATTTSGGDATAAGPSNFLDPSLFPAPLSTFMVAGTQFFPPSRSP.

Positions 1–23 (MANFFSLGGNQEQQHQEISSSQA) are disordered. Residues 11-22 (QEQQHQEISSSQ) are compositionally biased toward low complexity. Residues cysteine 129, cysteine 132, cysteine 140, cysteine 145, cysteine 149, and cysteine 156 each contribute to the Zn(2+) site. The zn(2)-C6 fungal-type; degenerate DNA-binding region spans 129–156 (CQDCGNQAKKDCQHMRCRTCCKSRGFQC). The disordered stretch occupies residues 170–219 (RRERQQQLAALQQQQQGHNNNNNNHKNKRQREDPSASSLVSTRLPSNTNG). Positions 175–193 (QQLAALQQQQQGHNNNNNN) are enriched in low complexity. Polar residues predominate over residues 204–219 (SASSLVSTRLPSNTNG). A Required for homo- and heterodimerization motif is present at residues 258 to 261 (IGGH). The segment at 286–320 (TSSGGSAGGVQHHHHNSAAVATATTTSGGDATAAG) is disordered. Positions 303–320 (AAVATATTTSGGDATAAG) are enriched in low complexity.

The protein belongs to the SHI protein family. As to quaternary structure, forms homodimers and heterodimers with LRP1.

It localises to the nucleus. Its function is as follows. Transcription activator involved in the transcriptional regulation of terpene biosynthesis in glandular trichomes. Binds to the promoter of the linalool synthase TPS5 and promotes TPS5 gene transactivation. Acts synergistically with MYC1 in the transactivation of TPS5. This Solanum lycopersicum (Tomato) protein is Protein EXPRESSION OF TERPENOIDS 1.